The primary structure comprises 230 residues: Large ribosomal subunit protein uL1 (230 aa).

It belongs to the universal ribosomal protein uL1 family. As to quaternary structure, part of the 50S ribosomal subunit.

Its function is as follows. Binds directly to 23S rRNA. The L1 stalk is quite mobile in the ribosome, and is involved in E site tRNA release. In terms of biological role, protein L1 is also a translational repressor protein, it controls the translation of the L11 operon by binding to its mRNA. The chain is Large ribosomal subunit protein uL1 from Bradyrhizobium sp. (strain ORS 278).